The sequence spans 1353 residues: Protein prickle (1353 aa).

3 disordered regions span residues 130–206 (VDDG…TKRN), 266–292 (QEEEPPEPPKPALPPKQKQPRPVPPLP), and 500–540 (AKYS…SAHA). A compositionally biased stretch (low complexity) spans 147–165 (TPTATATAGRPLFPLSSSP). Positions 166–178 (RRSKKLLRSLRAH) are enriched in basic residues. Residues 179–189 (VKGESRPEKPA) are compositionally biased toward basic and acidic residues. Positions 514–532 (LSPALSTPSPPSLLHHPAA) are enriched in low complexity. Residues 548 to 656 (MDMQRQSHSD…NVRQLMSARP (109 aa)) form the PET domain. 3 consecutive LIM zinc-binding domains span residues 655–719 (RPCD…ETLK), 720–780 (PRCS…MFAE), and 781–843 (YCDY…GEPP). 3 disordered regions span residues 840-892 (GEPP…HQAS), 933-962 (HCRSGDHAGGGDFTDFSGGRASSTSHNMSP), and 1062-1303 (ADIM…SSSS). Residues 861–892 (TQRVRPQTRITSSHASSSPPMSPQQQQQHQAS) show a composition bias toward low complexity. 2 stretches are compositionally biased toward polar residues: residues 952-962 (RASSTSHNMSP) and 1111-1120 (SLNTPLSAHS). Residues 1130–1142 (SILSGASSSSPMS) are compositionally biased toward low complexity. Over residues 1177 to 1205 (GDKDRDRDRERDRDRDRDKGGDKDRESGR) the composition is skewed to basic and acidic residues. Basic residues-rich tracts occupy residues 1207 to 1220 (GPGHSSRRRRRRKS) and 1228 to 1240 (NHHRSGSGHRSHS). Residues 1269-1284 (ETAHKSPRQQRERERE) are compositionally biased toward basic and acidic residues.

The protein belongs to the prickle / espinas / testin family. Interacts with dsh; PET and LIM domains interact with dsh DEP domain, in wing cells. Interacts with Vang in photoreceptor cells.

It localises to the cell membrane. Acts in a planar cell polarity (PCP) complex; polarization along the apical/basal axis of epithelial cells. PCP signaling in the wing disk requires the receptor fz and the cytoplasmic proteins dsh and pk. These act in a feedback loop leading to activation of the jnk cascade and subsequent polarized arrangement of hairs and bristles. Dgo and pk compete with one another for dsh binding, thereby modulating fz dsh activity and ensuring tight control over fz PCP signaling. Vang, stan and pk function together to regulate the establishment of tissue polarity in the adult eye. This chain is Protein prickle, found in Drosophila pseudoobscura pseudoobscura (Fruit fly).